The primary structure comprises 947 residues: Coiled-coil domain-containing protein 39 (947 aa).

Coiled-coil stretches lie at residues 16–194 (AIPV…TLDN), 221–402 (QELI…KELL), 471–522 (KVNT…TEKI), and 582–813 (VLTL…IRSG). 2 stretches are compositionally biased toward low complexity: residues 866–911 (SLPS…VSSP) and 926–947 (SPRG…CKSP). Residues 866-947 (SLPSPSSTPS…SRSSSKCKSP (82 aa)) form a disordered region.

It belongs to the CCDC39 family.

Its subcellular location is the cytoplasm. It localises to the cytoskeleton. The protein localises to the cilium axoneme. In terms of biological role, required for assembly of dynein regulatory complex (DRC) and inner dynein arm (IDA) complexes, which are responsible for ciliary beat regulation, thereby playing a central role in motility in cilia and flagella. Probably acts together with ccdc40 to form a molecular ruler that determines the 96 nanometer (nm) repeat length and arrangements of components in cilia and flagella. Not required for outer dynein arm complexes assembly. The polypeptide is Coiled-coil domain-containing protein 39 (ccdc39) (Danio rerio (Zebrafish)).